Consider the following 166-residue polypeptide: MTKQETVKHLVGVLSDAQAIVFTEYRGLSAAQLRALRILLRGDASYLIAKNTLARIAAQQVGFNDFAEFLRGPTAIVAVDGDIVSVAKSLRKFAETDGLLKIKGCFVDGQVFGSEHVKRLAELESREVILAKIASVTKGALSSALGLVSAPLSSAARVFVAMKNTF.

This sequence belongs to the universal ribosomal protein uL10 family. Part of the ribosomal stalk of the 50S ribosomal subunit. The N-terminus interacts with L11 and the large rRNA to form the base of the stalk. The C-terminus forms an elongated spine to which L12 dimers bind in a sequential fashion forming a multimeric L10(L12)X complex.

Forms part of the ribosomal stalk, playing a central role in the interaction of the ribosome with GTP-bound translation factors. The chain is Large ribosomal subunit protein uL10 from Tropheryma whipplei (strain TW08/27) (Whipple's bacillus).